We begin with the raw amino-acid sequence, 149 residues long: Large ribosomal subunit protein uL13 (149 aa).

It belongs to the universal ribosomal protein uL13 family. As to quaternary structure, part of the 50S ribosomal subunit.

This protein is one of the early assembly proteins of the 50S ribosomal subunit, although it is not seen to bind rRNA by itself. It is important during the early stages of 50S assembly. In Borrelia duttonii (strain Ly), this protein is Large ribosomal subunit protein uL13.